Here is a 408-residue protein sequence, read N- to C-terminus: Putative transporter AmpG 2 (408 aa).

Transmembrane regions (helical) follow at residues 11 to 31 (IFNI…YLLT), 49 to 69 (IGLF…GPLL), 84 to 104 (YCLV…TSFN), 110 to 130 (TPFV…DMLI), 154 to 174 (FRIG…IISW), 177 to 197 (VYRT…FYPL), 224 to 244 (WIVI…LSIM), 261 to 281 (IGYK…GGFL), 294 to 311 (VLIY…LYFL), 315 to 337 (IISL…SPFF), 353 to 373 (IALI…ISGY), and 382 to 402 (YFFI…LYLP).

This sequence belongs to the major facilitator superfamily.

It localises to the cell inner membrane. This Rickettsia typhi (strain ATCC VR-144 / Wilmington) protein is Putative transporter AmpG 2 (ampG2).